Consider the following 355-residue polypeptide: Peptide chain release factor 1 (355 aa).

Residue Gln-234 is modified to N5-methylglutamine.

This sequence belongs to the prokaryotic/mitochondrial release factor family. In terms of processing, methylated by PrmC. Methylation increases the termination efficiency of RF1.

It localises to the cytoplasm. In terms of biological role, peptide chain release factor 1 directs the termination of translation in response to the peptide chain termination codons UAG and UAA. The protein is Peptide chain release factor 1 of Metamycoplasma arthritidis (strain 158L3-1) (Mycoplasma arthritidis).